A 479-amino-acid polypeptide reads, in one-letter code: Acetylcholine receptor subunit alpha-type acr-15 (479 aa).

Residues 1–18 form the signal peptide; the sequence is MLLPILLHFLLLITQLNG. The Extracellular portion of the chain corresponds to 19 to 230; that stretch reads SPAEVRLIND…HLRRRTLYYS (212 aa). 2 N-linked (GlcNAc...) asparagine glycosylation sites follow: Asn-60 and Asn-92. A disulfide bridge connects residues Cys-146 and Cys-160. A glycan (N-linked (GlcNAc...) asparagine) is linked at Asn-200. Cys-208 and Cys-209 form a disulfide bridge. Residues 231–251 form a helical membrane-spanning segment; the sequence is FNLIAPVLLTMILVILGFTVS. Residues 252-257 lie on the Cytoplasmic side of the membrane; sequence PETCEK. A helical transmembrane segment spans residues 258 to 278; that stretch reads VGLQISVSLAICIFLTIMSEL. Residues 279-285 lie on the Extracellular side of the membrane; that stretch reads TPQTSEA. Residues 286–306 form a helical membrane-spanning segment; sequence VPLLGVFFHTCNFISVLATSF. Residues 307 to 453 lie on the Cytoplasmic side of the membrane; the sequence is TVYVQSFHFR…WRFAAIVVDR (147 aa). Residues 454-474 form a helical membrane-spanning segment; it reads LCLLAFSLLIVVVSIIIALRA. At 475–479 the chain is on the extracellular side; sequence PYLFA.

It belongs to the ligand-gated ion channel (TC 1.A.9) family. Acetylcholine receptor (TC 1.A.9.1) subfamily. In terms of tissue distribution, expressed in interneurons, motor neurons, pharyngeal neurons and muscles.

Its subcellular location is the cell membrane. It is found in the postsynaptic cell membrane. In terms of biological role, after binding acetylcholine, the AChR responds by an extensive change in conformation that affects all subunits and leads to opening of an ion-conducting channel across the plasma membrane. Activity is required in glutamatergic neurons to mediate nicotine-induced and nicotine-motivated behaviors. This Caenorhabditis elegans protein is Acetylcholine receptor subunit alpha-type acr-15.